Consider the following 276-residue polypeptide: Foldase protein PrsA (276 aa).

The first 18 residues, 1–18 (MRKWMIVAAVAAVFGLSA), serve as a signal peptide directing secretion. Cys19 carries the N-palmitoyl cysteine lipid modification. Cys19 is lipidated: S-diacylglycerol cysteine. The region spanning 133 to 223 (KPKIRASHIL…YGYHIIKVTD (91 aa)) is the PpiC domain.

This sequence belongs to the PrsA family.

The protein localises to the cell membrane. It catalyses the reaction [protein]-peptidylproline (omega=180) = [protein]-peptidylproline (omega=0). In terms of biological role, plays a major role in protein secretion by helping the post-translocational extracellular folding of several secreted proteins. This chain is Foldase protein PrsA, found in Geobacillus sp. (strain WCH70).